The sequence spans 1026 residues: RecBCD enzyme subunit RecB (1026 aa).

The UvrD-like helicase ATP-binding domain maps to M1–T438. The tract at residues M1–H766 is DNA-binding and helicase activity, interacts with RecC. Position 21–28 (A21–T28) interacts with ATP. Residues P452 to G700 enclose the UvrD-like helicase C-terminal domain. A nuclease activity, interacts with RecD and RecA region spans residues S815–P1026. Residues H854, D940, and D953 each contribute to the Mg(2+) site. The active-site For nuclease activity is D953.

The protein belongs to the helicase family. UvrD subfamily. Heterotrimer of RecB, RecC and RecD. All subunits contribute to DNA-binding. Interacts with RecA. Mg(2+) is required as a cofactor.

The catalysed reaction is Exonucleolytic cleavage (in the presence of ATP) in either 5'- to 3'- or 3'- to 5'-direction to yield 5'-phosphooligonucleotides.. The enzyme catalyses Couples ATP hydrolysis with the unwinding of duplex DNA by translocating in the 3'-5' direction.. It carries out the reaction ATP + H2O = ADP + phosphate + H(+). A helicase/nuclease that prepares dsDNA breaks (DSB) for recombinational DNA repair. Binds to DSBs and unwinds DNA via a highly rapid and processive ATP-dependent bidirectional helicase activity. Unwinds dsDNA until it encounters a Chi (crossover hotspot instigator) sequence from the 3' direction. Cuts ssDNA a few nucleotides 3' to the Chi site. The properties and activities of the enzyme are changed at Chi. The Chi-altered holoenzyme produces a long 3'-ssDNA overhang and facilitates RecA-binding to the ssDNA for homologous DNA recombination and repair. Holoenzyme degrades any linearized DNA that is unable to undergo homologous recombination. In the holoenzyme this subunit contributes ATPase, 3'-5' helicase, exonuclease activity and loads RecA onto ssDNA. The sequence is that of RecBCD enzyme subunit RecB from Chlamydia muridarum (strain MoPn / Nigg).